The sequence spans 287 residues: Festuclavine synthase II (287 aa).

Belongs to the fgaFS/easG family.

It carries out the reaction festuclavine + NAD(+) = 6,8-dimethyl-6,7-didehydroergoline + NADH + H(+). It functions in the pathway alkaloid biosynthesis; ergot alkaloid biosynthesis. In terms of biological role, festuclavine synthase; part of the gene cluster that mediates the biosynthesis of isofumigaclavines, fungal ergot alkaloids. The tryptophan dimethylallyltransferase ifgA catalyzes the first step of ergot alkaloid biosynthesis by condensing dimethylallyl diphosphate (DMAP) and tryptophan to form 4-dimethylallyl-L-tryptophan. The second step is catalyzed by the methyltransferase ifgB that methylates 4-dimethylallyl-L-tryptophan in the presence of S-adenosyl-L-methionine, resulting in the formation of N-methyl-dimethylallyl-L-tryptophan. The catalase ifgD and the FAD-dependent oxidoreductase ifgC then transform N-methyl-dimethylallyl-L-tryptophan to chanoclavine-I which is further oxidized by ifgE in the presence of NAD(+), resulting in the formation of chanoclavine-I aldehyde. The chanoclavine-I aldehyde reductases ifgG and/or fgaOx3 reduce chanoclavine-I aldehyde to dihydrochanoclavine-I aldehyde that spontaneously dehydrates to form 6,8-dimethyl-6,7-didehydroergoline. The festuclavine dehydrogenases ifgF1 and/or ifgF2 then catalyze the reduction of 6,8-dimethyl-6,7-didehydroergoline to form festuclavine. Hydrolysis of festuclavine by a yet undetermined cytochrome P450 monooxygenase (called ifgH) then leads to the formation of isofumigaclavine B which is in turn acetylated by ifgI to isofumigaclavine A. Penicillium roqueforti has interestingly at least two sets of genes for the consumption of chanoclavine-I aldehyde on three different loci, the OYEs ifgG/fgaOx3 and the festuclavine synthase homologs ifgF1/ifgF2. The reason for the duplication of these genes is unclear, probably to ensure the conversion of chanoclavine-I aldehyde by differential gene expression under various environmental conditions. The protein is Festuclavine synthase II of Penicillium roqueforti (strain FM164).